We begin with the raw amino-acid sequence, 399 residues long: Dual-specificity RNA methyltransferase RlmN (399 aa).

Glu-121 functions as the Proton acceptor in the catalytic mechanism. In terms of domain architecture, Radical SAM core spans 127 to 376 (DVDRGTLCVS…VRTPRGRDIL (250 aa)). Cys-134 and Cys-379 are joined by a disulfide. Residues Cys-141, Cys-145, and Cys-148 each contribute to the [4Fe-4S] cluster site. S-adenosyl-L-methionine-binding positions include 205 to 206 (GE), Ser-237, 259 to 261 (SLH), and Asn-336. Cys-379 serves as the catalytic S-methylcysteine intermediate.

This sequence belongs to the radical SAM superfamily. RlmN family. It depends on [4Fe-4S] cluster as a cofactor.

The protein resides in the cytoplasm. It carries out the reaction adenosine(2503) in 23S rRNA + 2 reduced [2Fe-2S]-[ferredoxin] + 2 S-adenosyl-L-methionine = 2-methyladenosine(2503) in 23S rRNA + 5'-deoxyadenosine + L-methionine + 2 oxidized [2Fe-2S]-[ferredoxin] + S-adenosyl-L-homocysteine. The enzyme catalyses adenosine(37) in tRNA + 2 reduced [2Fe-2S]-[ferredoxin] + 2 S-adenosyl-L-methionine = 2-methyladenosine(37) in tRNA + 5'-deoxyadenosine + L-methionine + 2 oxidized [2Fe-2S]-[ferredoxin] + S-adenosyl-L-homocysteine. Specifically methylates position 2 of adenine 2503 in 23S rRNA and position 2 of adenine 37 in tRNAs. m2A2503 modification seems to play a crucial role in the proofreading step occurring at the peptidyl transferase center and thus would serve to optimize ribosomal fidelity. This chain is Dual-specificity RNA methyltransferase RlmN, found in Methylocella silvestris (strain DSM 15510 / CIP 108128 / LMG 27833 / NCIMB 13906 / BL2).